Here is a 193-residue protein sequence, read N- to C-terminus: Orotate phosphoribosyltransferase (193 aa).

Residue 114-122 (EDVITTGGS) coordinates 5-phospho-alpha-D-ribose 1-diphosphate. 2 residues coordinate orotate: Thr-118 and Arg-146.

This sequence belongs to the purine/pyrimidine phosphoribosyltransferase family. PyrE subfamily. As to quaternary structure, homodimer. Requires Mg(2+) as cofactor.

It carries out the reaction orotidine 5'-phosphate + diphosphate = orotate + 5-phospho-alpha-D-ribose 1-diphosphate. It functions in the pathway pyrimidine metabolism; UMP biosynthesis via de novo pathway; UMP from orotate: step 1/2. Catalyzes the transfer of a ribosyl phosphate group from 5-phosphoribose 1-diphosphate to orotate, leading to the formation of orotidine monophosphate (OMP). This Chlorobium phaeobacteroides (strain BS1) protein is Orotate phosphoribosyltransferase.